The chain runs to 333 residues: Protein-methionine-sulfoxide reductase catalytic subunit MsrP (333 aa).

The segment at residues 1–43 is a signal peptide (tat-type signal); sequence MHKHRKPTEADVTPESLFYQRRRVLKALGISAAALSLPLSAQA. Mo-molybdopterin is bound by residues asparagine 87, 90 to 91, cysteine 145, threonine 180, asparagine 232, arginine 237, and 248 to 250; these read YE and NIK.

Belongs to the MsrP family. As to quaternary structure, heterodimer of a catalytic subunit (MsrP) and a heme-binding subunit (MsrQ). Requires Mo-molybdopterin as cofactor. In terms of processing, predicted to be exported by the Tat system. The position of the signal peptide cleavage has not been experimentally proven.

It is found in the periplasm. It catalyses the reaction L-methionyl-[protein] + a quinone + H2O = L-methionyl-(S)-S-oxide-[protein] + a quinol. The catalysed reaction is L-methionyl-[protein] + a quinone + H2O = L-methionyl-(R)-S-oxide-[protein] + a quinol. Its function is as follows. Part of the MsrPQ system that repairs oxidized periplasmic proteins containing methionine sulfoxide residues (Met-O), using respiratory chain electrons. Thus protects these proteins from oxidative-stress damage caused by reactive species of oxygen and chlorine generated by the host defense mechanisms. MsrPQ is essential for the maintenance of envelope integrity under bleach stress, rescuing a wide series of structurally unrelated periplasmic proteins from methionine oxidation. The catalytic subunit MsrP is non-stereospecific, being able to reduce both (R-) and (S-) diastereoisomers of methionine sulfoxide. The sequence is that of Protein-methionine-sulfoxide reductase catalytic subunit MsrP from Pectobacterium atrosepticum (strain SCRI 1043 / ATCC BAA-672) (Erwinia carotovora subsp. atroseptica).